Here is a 107-residue protein sequence, read N- to C-terminus: C-X-C motif chemokine 2 (107 aa).

An N-terminal signal peptide occupies residues 1-34; that stretch reads MARATLSAAPSNPRLLRVALLLLLLVAASRRAAG. 2 cysteine pairs are disulfide-bonded: cysteine 43–cysteine 69 and cysteine 45–cysteine 85.

This sequence belongs to the intercrine alpha (chemokine CxC) family. Post-translationally, the N-terminal processed form GRO-beta(5-73) is produced by proteolytic cleavage after secretion from bone marrow stromal cells.

The protein localises to the secreted. Its function is as follows. Produced by activated monocytes and neutrophils and expressed at sites of inflammation. Hematoregulatory chemokine, which, in vitro, suppresses hematopoietic progenitor cell proliferation. GRO-beta(5-73) shows a highly enhanced hematopoietic activity. The protein is C-X-C motif chemokine 2 (CXCL2) of Homo sapiens (Human).